The chain runs to 361 residues: Tyrosine--tRNA ligase (361 aa).

Residues Y36, Y162, Q166, D169, and Q184 each coordinate L-tyrosine. Residues 235-239 carry the 'KMSKS' region motif; that stretch reads KMSKS. K238 contacts ATP.

Belongs to the class-I aminoacyl-tRNA synthetase family. TyrS type 4 subfamily. In terms of assembly, homodimer.

The protein localises to the cytoplasm. The enzyme catalyses tRNA(Tyr) + L-tyrosine + ATP = L-tyrosyl-tRNA(Tyr) + AMP + diphosphate + H(+). Catalyzes the attachment of tyrosine to tRNA(Tyr) in a two-step reaction: tyrosine is first activated by ATP to form Tyr-AMP and then transferred to the acceptor end of tRNA(Tyr). This chain is Tyrosine--tRNA ligase, found in Sulfolobus acidocaldarius (strain ATCC 33909 / DSM 639 / JCM 8929 / NBRC 15157 / NCIMB 11770).